The chain runs to 183 residues: Capsid protein (183 aa).

Positions 150–183 are disordered; sequence RQRGRTIRRRTPSPRRRRSQSPRRRRSQSRESQC. The segment covering 151–176 has biased composition (basic residues); sequence QRGRTIRRRTPSPRRRRSQSPRRRRS. The Bipartite nuclear localization signal signature appears at 158 to 175; it reads RRTPSPRRRRSQSPRRRR. A phosphoserine; by host mark is found at serine 162 and serine 170. 2 tandem repeats follow at residues 162-169 and 170-177. A 2 X 8 AA repeats of S-P-R-R-R-[PR]-S-Q region spans residues 162-177; it reads SPRRRRSQSPRRRRSQ. Positions 177–183 are RNA binding; sequence QSRESQC.

This sequence belongs to the orthohepadnavirus core antigen family. In terms of assembly, homodimerizes, then multimerizes. Interacts with cytosol exposed regions of viral L glycoprotein present in the reticulum-to-Golgi compartment. Interacts with human FLNB. Phosphorylated form interacts with host importin alpha; this interaction depends on the exposure of the NLS, which itself depends upon genome maturation and/or phosphorylation of the capsid protein. Interacts with host NUP153. In terms of processing, phosphorylated by host SRPK1, SRPK2, and maybe protein kinase C or GAPDH. Phosphorylation is critical for pregenomic RNA packaging. Protein kinase C phosphorylation is stimulated by HBx protein and may play a role in transport of the viral genome to the nucleus at the late step during the viral replication cycle.

It is found in the virion. Its subcellular location is the host cytoplasm. Self assembles to form an icosahedral capsid. Most capsids appear to be large particles with an icosahedral symmetry of T=4 and consist of 240 copies of capsid protein, though a fraction forms smaller T=3 particles consisting of 180 capsid proteins. Entering capsids are transported along microtubules to the nucleus. Phosphorylation of the capsid is thought to induce exposure of nuclear localization signal in the C-terminal portion of the capsid protein that allows binding to the nuclear pore complex via the importin (karyopherin-) alpha and beta. Capsids are imported in intact form through the nuclear pore into the nuclear basket, where it probably binds NUP153. Only capsids that contain the mature viral genome can release the viral DNA and capsid protein into the nucleoplasm. Immature capsids get stuck in the basket. Capsids encapsulate the pre-genomic RNA and the P protein. Pre-genomic RNA is reverse-transcribed into DNA while the capsid is still in the cytoplasm. The capsid can then either be directed to the nucleus, providing more genomes for transcription, or bud through the endoplasmic reticulum to provide new virions. This is Capsid protein from Homo sapiens (Human).